Consider the following 530-residue polypeptide: MSSLRPEEARKLATAASVSPLSNCQFSGVVISSIADEQKLEFTNKYKGSCTLLCSYDSQGVVLRVVSDDDRSHVLKEYMIAADTDAAQMGRRSYAVSLDADNLVLRFASDQDQQLFRKVVENVKHLRPKSVFSQRTEESSASQYFQFYGYLSQQQNMMQDYVRTSTYQRAILGNAVDFQDKIVLDVGAGSGILSFFAVQAGAAKVYAIEASNMAQYAQQLVESNNVQHKISVIPGKIEEIELPEKVDVIISEPMGYMLYNERMLETYLHARKWLKPQGKMYPTHGDLHIAPFSDESLYSEQYNKANFWYQSAFHGVDLTTLHKEGMKEYFRQPIVDTFDIRICMAKSVRHVCDFLNDKEDDLHLISIPLEFHILQTGICHGLAFWFDVEFSGSSQNVWLSTSPTAPLTHWYQVRCLLPMPIFIKQGQTLTGRVLLEANRRQSYDVTIDLHIEGTLISSSNTLDLKNPYFRYTGAPVQAPPGTSTQSPSEQYWTQVDTQGSRNSSSMLNGGLSVNGIGDGMDITHGLMHPH.

One can recognise an SAM-dependent MTase PRMT-type domain in the interval 141-450 (ASQYFQFYGY…QSYDVTIDLH (310 aa)). S-adenosyl-L-methionine-binding residues include glutamine 154, arginine 163, glycine 187, glutamate 209, glutamate 238, and threonine 266. Position 501 is an asymmetric dimethylarginine; by autocatalysis (arginine 501).

This sequence belongs to the class I-like SAM-binding methyltransferase superfamily. Protein arginine N-methyltransferase family. As to quaternary structure, homodimer. The dimethylated protein is the major form.

It localises to the cytoplasm. It is found in the nucleus. The enzyme catalyses L-arginyl-[protein] + 2 S-adenosyl-L-methionine = N(omega),N(omega)-dimethyl-L-arginyl-[protein] + 2 S-adenosyl-L-homocysteine + 2 H(+). Its function is as follows. Methylates (mono- and asymmetric dimethylation) the guanidino nitrogens of arginyl residues in proteins. May methylate histone H3 at 'Arg-17' and activate transcription via chromatin remodeling. This chain is Histone-arginine methyltransferase CARMER (Art4), found in Drosophila erecta (Fruit fly).